The following is a 750-amino-acid chain: Probable methylmalonyl-CoA mutase large subunit (750 aa).

(R)-methylmalonyl-CoA contacts are provided by Tyr-91, Met-94, Thr-101, Arg-103, Tyr-105, and Ser-130. Phe-133 and Ala-155 together coordinate cob(II)alamin. (R)-methylmalonyl-CoA is bound by residues Thr-211 and Gln-213. Cob(II)alamin contacts are provided by Val-222 and Arg-223. Positions 223, 260, 299, and 301 each coordinate (R)-methylmalonyl-CoA. Positions 349, 386, 389, 628, 629, 630, 631, 674, 676, 705, and 728 each coordinate cob(II)alamin. Positions 616–748 constitute a B12-binding domain; it reads RPRILIAKMG…HRLAERLGYT (133 aa).

The protein belongs to the methylmalonyl-CoA mutase family. Heterodimer of an alpha and a beta chain. Adenosylcob(III)alamin is required as a cofactor.

The enzyme catalyses (R)-methylmalonyl-CoA = succinyl-CoA. It functions in the pathway metabolic intermediate metabolism; propanoyl-CoA degradation; succinyl-CoA from propanoyl-CoA: step 3/3. Functionally, catalyzes the isomerization of succinyl-CoA to methylmalonyl-CoA during synthesis of propionate from tricarboxylic acid-cycle intermediates. The chain is Probable methylmalonyl-CoA mutase large subunit (mutB) from Mycobacterium bovis (strain ATCC BAA-935 / AF2122/97).